Here is a 655-residue protein sequence, read N- to C-terminus: Peroxidase skpo-1 (655 aa).

Positions 1–19 (MKSLLFSILLIYLIQLVRS) are cleaved as a signal peptide. Residues 22–56 (CTDKHIHCFFWSQEGECEVNPRWMKKHCQKACGTC) form the ShKT domain. 4 disulfides stabilise this stretch: cysteine 22–cysteine 56, cysteine 29–cysteine 49, cysteine 38–cysteine 53, and cysteine 133–cysteine 150. Residue histidine 222 is the Proton acceptor of the active site. Position 428 (histidine 428) interacts with heme b. 2 disulfide bridges follow: cysteine 520/cysteine 576 and cysteine 617/cysteine 642.

It belongs to the peroxidase family. XPO subfamily. Requires heme b as cofactor. As to expression, exclusively expressed in hypodermis.

The enzyme catalyses 2 a phenolic donor + H2O2 = 2 a phenolic radical donor + 2 H2O. Its function is as follows. Involved in hypodermal immune response against some types of bacterial infection. Probably utilizes H(2)O(2) produced by the NADPH oxidase bli-3. May play a role in cuticule biosynthesis. This Caenorhabditis elegans protein is Peroxidase skpo-1.